The primary structure comprises 305 residues: Ribonuclease BN (305 aa).

Zn(2+) is bound by residues His-64, His-66, Asp-68, His-69, His-141, Asp-212, and His-270. The active-site Proton acceptor is the Asp-68.

The protein belongs to the RNase Z family. RNase BN subfamily. As to quaternary structure, homodimer. The cofactor is Zn(2+).

Its function is as follows. Zinc phosphodiesterase, which has both exoribonuclease and endoribonuclease activities. The sequence is that of Ribonuclease BN from Escherichia coli O17:K52:H18 (strain UMN026 / ExPEC).